Consider the following 474-residue polypeptide: 1-aminocyclopropane-1-carboxylate synthase 4 (474 aa).

Positions 47 and 85 each coordinate substrate. The residue at position 273 (lysine 273) is an N6-(pyridoxal phosphate)lysine.

The protein belongs to the class-I pyridoxal-phosphate-dependent aminotransferase family. In terms of assembly, homodimer and heterodimer. In vivo, the relevance of heterodimerization with other ACS enzymes is however unsure. Interacts with XBAT32. Interacts (via its C-terminal region) with ETO1 and EOL1. It depends on pyridoxal 5'-phosphate as a cofactor. Ubiquitinated by XBAT32. Ubiquitination probably leads to its subsequent degradation, thus controlling ethylene production. In terms of tissue distribution, expressed in roots, leaves and flowers.

The catalysed reaction is S-adenosyl-L-methionine = 1-aminocyclopropane-1-carboxylate + S-methyl-5'-thioadenosine + H(+). It functions in the pathway alkene biosynthesis; ethylene biosynthesis via S-adenosyl-L-methionine; ethylene from S-adenosyl-L-methionine: step 1/2. Its function is as follows. 1-aminocyclopropane-1-carboxylate synthase (ACS) enzymes catalyze the conversion of S-adenosyl-L-methionine (SAM) into 1-aminocyclopropane-1-carboxylate (ACC), a direct precursor of ethylene. The polypeptide is 1-aminocyclopropane-1-carboxylate synthase 4 (ACS4) (Arabidopsis thaliana (Mouse-ear cress)).